The chain runs to 164 residues: ATP synthase subunit b (164 aa).

The chain crosses the membrane as a helical span at residues 4-24 (LGINPTLFIAQLINFLLLIFI).

Belongs to the ATPase B chain family. F-type ATPases have 2 components, F(1) - the catalytic core - and F(0) - the membrane proton channel. F(1) has five subunits: alpha(3), beta(3), gamma(1), delta(1), epsilon(1). F(0) has four main subunits: a(1), b(2) and c(10-14). The alpha and beta chains form an alternating ring which encloses part of the gamma chain. F(1) is attached to F(0) by a central stalk formed by the gamma and epsilon chains, while a peripheral stalk is formed by the delta and b chains.

The protein localises to the cell membrane. In terms of biological role, f(1)F(0) ATP synthase produces ATP from ADP in the presence of a proton or sodium gradient. F-type ATPases consist of two structural domains, F(1) containing the extramembraneous catalytic core and F(0) containing the membrane proton channel, linked together by a central stalk and a peripheral stalk. During catalysis, ATP synthesis in the catalytic domain of F(1) is coupled via a rotary mechanism of the central stalk subunits to proton translocation. Functionally, component of the F(0) channel, it forms part of the peripheral stalk, linking F(1) to F(0). This chain is ATP synthase subunit b, found in Chloroflexus aurantiacus (strain ATCC 29366 / DSM 635 / J-10-fl).